The following is a 406-amino-acid chain: Imidazolonepropionase (406 aa).

Histidine 65 and histidine 67 together coordinate Fe(3+). Histidine 65 and histidine 67 together coordinate Zn(2+). Arginine 74, tyrosine 137, and histidine 170 together coordinate 4-imidazolone-5-propanoate. Tyrosine 137 is an N-formimidoyl-L-glutamate binding site. Position 235 (histidine 235) interacts with Fe(3+). Histidine 235 is a binding site for Zn(2+). Residue glutamine 238 coordinates 4-imidazolone-5-propanoate. Aspartate 310 contacts Fe(3+). Aspartate 310 contributes to the Zn(2+) binding site. The N-formimidoyl-L-glutamate site is built by asparagine 312 and glycine 314. Threonine 315 serves as a coordination point for 4-imidazolone-5-propanoate.

This sequence belongs to the metallo-dependent hydrolases superfamily. HutI family. The cofactor is Zn(2+). Fe(3+) is required as a cofactor.

The protein localises to the cytoplasm. It carries out the reaction 4-imidazolone-5-propanoate + H2O = N-formimidoyl-L-glutamate. Its pathway is amino-acid degradation; L-histidine degradation into L-glutamate; N-formimidoyl-L-glutamate from L-histidine: step 3/3. Catalyzes the hydrolytic cleavage of the carbon-nitrogen bond in imidazolone-5-propanoate to yield N-formimidoyl-L-glutamate. It is the third step in the universal histidine degradation pathway. In Vibrio vulnificus (strain YJ016), this protein is Imidazolonepropionase.